Here is a 331-residue protein sequence, read N- to C-terminus: Adenosine deaminase (331 aa).

His-12 and His-14 together coordinate Zn(2+). Residues His-14 and Asp-16 each contribute to the substrate site. His-197 lines the Zn(2+) pocket. The active-site Proton donor is the Glu-200. Asp-278 contributes to the Zn(2+) binding site.

It belongs to the metallo-dependent hydrolases superfamily. Adenosine and AMP deaminases family. Adenosine deaminase subfamily. Requires Zn(2+) as cofactor.

It catalyses the reaction adenosine + H2O + H(+) = inosine + NH4(+). It carries out the reaction 2'-deoxyadenosine + H2O + H(+) = 2'-deoxyinosine + NH4(+). Functionally, catalyzes the hydrolytic deamination of adenosine and 2-deoxyadenosine. The protein is Adenosine deaminase of Shewanella halifaxensis (strain HAW-EB4).